We begin with the raw amino-acid sequence, 150 residues long: Large ribosomal subunit protein bL9 (150 aa).

This sequence belongs to the bacterial ribosomal protein bL9 family.

Its function is as follows. Binds to the 23S rRNA. The protein is Large ribosomal subunit protein bL9 of Streptococcus mutans serotype c (strain ATCC 700610 / UA159).